The following is a 59-amino-acid chain: Insertion element IS986 uncharacterized 6.6 kDa protein (59 aa).

Residues 1–26 (MRKWVRQAQVDAGARPGTTTEESAEI) form a disordered region.

Belongs to the transposase 8 family.

The polypeptide is Insertion element IS986 uncharacterized 6.6 kDa protein (Mycobacterium tuberculosis).